A 189-amino-acid polypeptide reads, in one-letter code: Peptidyl-tRNA hydrolase (189 aa).

Tyr14 provides a ligand contact to tRNA. The active-site Proton acceptor is His19. TRNA contacts are provided by Tyr64, Asn66, and Asn112.

This sequence belongs to the PTH family. As to quaternary structure, monomer.

The protein localises to the cytoplasm. It carries out the reaction an N-acyl-L-alpha-aminoacyl-tRNA + H2O = an N-acyl-L-amino acid + a tRNA + H(+). Its function is as follows. Hydrolyzes ribosome-free peptidyl-tRNAs (with 1 or more amino acids incorporated), which drop off the ribosome during protein synthesis, or as a result of ribosome stalling. In terms of biological role, catalyzes the release of premature peptidyl moieties from peptidyl-tRNA molecules trapped in stalled 50S ribosomal subunits, and thus maintains levels of free tRNAs and 50S ribosomes. The polypeptide is Peptidyl-tRNA hydrolase (Clostridium botulinum (strain Loch Maree / Type A3)).